A 205-amino-acid polypeptide reads, in one-letter code: GTP cyclohydrolase 1 (205 aa).

Cys94, His97, and Cys165 together coordinate Zn(2+).

This sequence belongs to the GTP cyclohydrolase I family. In terms of assembly, homomer.

It carries out the reaction GTP + H2O = 7,8-dihydroneopterin 3'-triphosphate + formate + H(+). Its pathway is cofactor biosynthesis; 7,8-dihydroneopterin triphosphate biosynthesis; 7,8-dihydroneopterin triphosphate from GTP: step 1/1. This chain is GTP cyclohydrolase 1, found in Sinorhizobium fredii (strain NBRC 101917 / NGR234).